The chain runs to 422 residues: Mannose-1-phosphate guanylyltransferase regulatory subunit alpha-A (422 aa).

A substrate-binding domain region spans residues 2 to 253 (LKAVILIGGP…DRFWSQIKSA (252 aa)). The GDP-alpha-D-mannose site is built by E85 and Q249. The hexapeptide repeat domain stretch occupies residues 275-422 (LATNTEGGAK…NRSFKNQIIL (148 aa)). The C-loop stretch occupies residues 358–386 (TPSDPNPNDPYAKIDSETLFRDGKLTPSI).

Belongs to the transferase hexapeptide repeat family. Component of the GMPPA-GMPPB mannose-1-phosphate guanylyltransferase complex composed of 4 gmppa subunits and 8 gmppb subunits; the complex is organized into three layers, a central layer made up of 2 gmppa dimers sandwiched between two layers each made up of 2 gmppb dimers.

It functions in the pathway nucleotide-sugar biosynthesis; GDP-alpha-D-mannose biosynthesis; GDP-alpha-D-mannose from alpha-D-mannose 1-phosphate (GTP route): step 1/1. Regulatory subunit of the GMPPA-GMPPB mannose-1-phosphate guanylyltransferase complex; reduces the catalytic activity of GMPPB when part of the complex. Mediates allosteric feedback inhibition of GMPPB catalytic activity upon binding GDP-alpha-D-mannose. Together with GMPPB regulates GDP-alpha-D-mannose levels. One of two paralogs (gmppaa and gmppab) that may have redundant functions. This Danio rerio (Zebrafish) protein is Mannose-1-phosphate guanylyltransferase regulatory subunit alpha-A (gmppaa).